The primary structure comprises 346 residues: Membrane progestin receptor alpha (346 aa).

Residues 1–72 (MAMAQKLSHL…RTLFQQHNEA (72 aa)) are Cytoplasmic-facing. A helical transmembrane segment spans residues 73-93 (VNVWTHLLAALVLLLRLALFV). The Extracellular segment spans residues 94–103 (ETVDFWGDPH). A helical transmembrane segment spans residues 104–124 (ALPLFIIVLASFTYLSFSALA). Over 125–137 (HLLQAKSEFWHYS) the chain is Cytoplasmic. Residues 138-158 (FFFLDYVGVAVYQFGSALAHF) traverse the membrane as a helical segment. Residues 159–169 (YYAIEPAWHAQ) are Extracellular-facing. A helical transmembrane segment spans residues 170–190 (VQAVFLPMAAFLAWLSCIGSC). Over 191–237 (YNKYIQKPGLLGRTCQEVPSVLAYALDISPVVHRIFVSSDPTTDDPA) the chain is Cytoplasmic. The helical transmembrane segment at 238-258 (LLYHKCQVVFFLLAAAFFSTF) threads the bilayer. Residues 259–276 (MPERWFPGSCHVFGQGHQ) are Extracellular-facing. The helical transmembrane segment at 277-297 (LFHIFLVLCTLAQLEAVALDY) threads the bilayer. Residues 298–316 (EARRPIYEPLHTHWPHNFS) lie on the Cytoplasmic side of the membrane. Residues 317–337 (GLFLLTVGSSILTAFLLSQLV) traverse the membrane as a helical segment. At 338–346 (QRKLDQKTK) the chain is on the extracellular side.

Belongs to the ADIPOR family. Expressed in a wide range of tissues including ovary, testis, placenta, uterus and bladder.

The protein resides in the cell membrane. In terms of biological role, plasma membrane progesterone (P4) receptor coupled to G proteins. Seems to act through a G(i) mediated pathway. May be involved in oocyte maturation. Involved in neurosteroid inhibition of apoptosis. Also binds dehydroepiandrosterone (DHEA), pregnanolone, pregnenolone and allopregnanolone. The sequence is that of Membrane progestin receptor alpha from Homo sapiens (Human).